The sequence spans 760 residues: Xaa-Pro dipeptidyl-peptidase (760 aa).

Active-site charge relay system residues include S349, D469, and H499.

Belongs to the peptidase S15 family. As to quaternary structure, homodimer.

The protein localises to the cytoplasm. It catalyses the reaction Hydrolyzes Xaa-Pro-|- bonds to release unblocked, N-terminal dipeptides from substrates including Ala-Pro-|-p-nitroanilide and (sequentially) Tyr-Pro-|-Phe-Pro-|-Gly-Pro-|-Ile.. Functionally, removes N-terminal dipeptides sequentially from polypeptides having unsubstituted N-termini provided that the penultimate residue is proline. This is Xaa-Pro dipeptidyl-peptidase from Streptococcus pyogenes serotype M49 (strain NZ131).